The sequence spans 613 residues: Dihydroxy-acid dehydratase (613 aa).

Asp-81 is a binding site for Mg(2+). Cys-122 lines the [2Fe-2S] cluster pocket. Mg(2+) is bound by residues Asp-123 and Lys-124. Lys-124 carries the N6-carboxylysine modification. Cys-193 is a [2Fe-2S] cluster binding site. Residue Glu-489 coordinates Mg(2+). Catalysis depends on Ser-515, which acts as the Proton acceptor.

Belongs to the IlvD/Edd family. In terms of assembly, homodimer. The cofactor is [2Fe-2S] cluster. It depends on Mg(2+) as a cofactor.

It catalyses the reaction (2R)-2,3-dihydroxy-3-methylbutanoate = 3-methyl-2-oxobutanoate + H2O. The catalysed reaction is (2R,3R)-2,3-dihydroxy-3-methylpentanoate = (S)-3-methyl-2-oxopentanoate + H2O. It participates in amino-acid biosynthesis; L-isoleucine biosynthesis; L-isoleucine from 2-oxobutanoate: step 3/4. Its pathway is amino-acid biosynthesis; L-valine biosynthesis; L-valine from pyruvate: step 3/4. Its function is as follows. Functions in the biosynthesis of branched-chain amino acids. Catalyzes the dehydration of (2R,3R)-2,3-dihydroxy-3-methylpentanoate (2,3-dihydroxy-3-methylvalerate) into 2-oxo-3-methylpentanoate (2-oxo-3-methylvalerate) and of (2R)-2,3-dihydroxy-3-methylbutanoate (2,3-dihydroxyisovalerate) into 2-oxo-3-methylbutanoate (2-oxoisovalerate), the penultimate precursor to L-isoleucine and L-valine, respectively. The sequence is that of Dihydroxy-acid dehydratase from Pseudomonas putida (strain W619).